Here is a 221-residue protein sequence, read N- to C-terminus: Ras-related protein Rab-28 (221 aa).

At Ser2 the chain carries N-acetylserine. At Ser8 the chain carries Phosphoserine. GTP-binding residues include Gly21, Gly24, Lys25, Thr26, Ser27, Gly38, Lys39, Tyr41, and Thr44. Thr26 is a Mg(2+) binding site. The switch I stretch occupies residues Glu35 to Phe49. The Mg(2+) site is built by Thr44 and Asp68. The interval Asp68–Gly85 is switch II. 6 residues coordinate GTP: Gly71, Asn129, Lys130, Asp132, Ala160, and Lys161. A Cysteine methyl ester modification is found at Cys218. Residue Cys218 is the site of S-farnesyl cysteine attachment. A propeptide spans Ala219 to Gln221 (removed in mature form).

This sequence belongs to the small GTPase superfamily. Rab family. As to quaternary structure, interacts (prenylated form) with PDE6D; the interaction promotes RAB28 delivery to the photoreceptor outer segments. Interacts with KCNJ13; the interaction may facilitate cone outer segments phagocytosis. Also participates in nuclear factor kappa-B p65/RELA nuclear transport in endothelial cells. It depends on Mg(2+) as a cofactor. Isoprenylated.

The protein resides in the cell membrane. It localises to the cytoplasm. Its subcellular location is the cytoskeleton. The protein localises to the cilium basal body. It is found in the nucleus. It carries out the reaction GTP + H2O = GDP + phosphate + H(+). With respect to regulation, regulated by guanine nucleotide exchange factors (GEFs) which promote the exchange of bound GDP for free GTP. Regulated by GTPase activating proteins (GAPs) which increase the GTP hydrolysis activity. Inhibited by GDP dissociation inhibitors (GDIs). In terms of biological role, the small GTPases Rab are key regulators of intracellular membrane trafficking, from the formation of transport vesicles to their fusion with membranes. Rabs cycle between an inactive GDP-bound form and an active GTP-bound form that is able to recruit to membranes different sets of downstream effectors directly responsible for vesicle formation, movement, tethering and fusion. RAB28 is required for shedding and phagocytosis of cone cell outer segments (OS) discs in the retina. Also participates in nuclear factor kappa-B p65/RELA nuclear transport in endothelial cells. The protein is Ras-related protein Rab-28 (RAB28) of Pongo abelii (Sumatran orangutan).